The primary structure comprises 1285 residues: DNA polymerase II large subunit (1285 aa).

A disordered region spans residues 565–586 (TRIGGRMGRPGKSKPREMRPPP).

Belongs to the archaeal DNA polymerase II family. As to quaternary structure, heterodimer of a large subunit and a small subunit. Post-translationally, this protein undergoes a protein self splicing that involves a post-translational excision of the intervening region (intein) followed by peptide ligation.

It catalyses the reaction DNA(n) + a 2'-deoxyribonucleoside 5'-triphosphate = DNA(n+1) + diphosphate. The catalysed reaction is Exonucleolytic cleavage in the 3'- to 5'-direction to yield nucleoside 5'-phosphates.. Possesses two activities: a DNA synthesis (polymerase) and an exonucleolytic activity that degrades single-stranded DNA in the 3'- to 5'-direction. Has a template-primer preference which is characteristic of a replicative DNA polymerase. This Methanoculleus marisnigri (strain ATCC 35101 / DSM 1498 / JR1) protein is DNA polymerase II large subunit.